The following is a 495-amino-acid chain: Glutamyl-tRNA(Gln) amidotransferase subunit A (495 aa).

Residues Lys-75 and Ser-150 each act as charge relay system in the active site. Residue Ser-174 is the Acyl-ester intermediate of the active site.

Belongs to the amidase family. GatA subfamily. In terms of assembly, heterotrimer of A, B and C subunits.

It carries out the reaction L-glutamyl-tRNA(Gln) + L-glutamine + ATP + H2O = L-glutaminyl-tRNA(Gln) + L-glutamate + ADP + phosphate + H(+). Functionally, allows the formation of correctly charged Gln-tRNA(Gln) through the transamidation of misacylated Glu-tRNA(Gln) in organisms which lack glutaminyl-tRNA synthetase. The reaction takes place in the presence of glutamine and ATP through an activated gamma-phospho-Glu-tRNA(Gln). The sequence is that of Glutamyl-tRNA(Gln) amidotransferase subunit A from Paraburkholderia xenovorans (strain LB400).